Reading from the N-terminus, the 53-residue chain is Rubredoxin (53 aa).

One can recognise a Rubredoxin-like domain in the interval 1–52 (MAKWRCKICGYIYDEDEGDPDNGISPGTKFEDLPDDWVCPLCGAPKSEFERI). Positions 6, 9, 39, and 42 each coordinate Fe cation.

Belongs to the rubredoxin family. It depends on Fe(3+) as a cofactor.

Functionally, rubredoxin is a small nonheme, iron protein lacking acid-labile sulfide. Its single Fe, chelated to 4 Cys, functions as an electron acceptor and may also stabilize the conformation of the molecule. The protein is Rubredoxin (rub) of Pyrococcus abyssi (strain GE5 / Orsay).